The sequence spans 39 residues: Contryphan-Cal4 (39 aa).

The signal sequence occupies residues 1–20 (MTRTAVLLLTLLFLVAMAAS). Cys29 and Cys35 are oxidised to a cystine.

As to expression, expressed by the venom duct.

It is found in the secreted. In terms of biological role, probable neurotoxin. In Californiconus californicus (California cone), this protein is Contryphan-Cal4.